Reading from the N-terminus, the 619-residue chain is Chaperone protein HscA homolog (619 aa).

Belongs to the heat shock protein 70 family.

In terms of biological role, chaperone involved in the maturation of iron-sulfur cluster-containing proteins. Has a low intrinsic ATPase activity which is markedly stimulated by HscB. This is Chaperone protein HscA homolog from Laribacter hongkongensis (strain HLHK9).